The following is a 529-amino-acid chain: NADPH-dependent thioredoxin reductase 3 (529 aa).

The N-terminal 67 residues, 1 to 67, are a transit peptide targeting the chloroplast; the sequence is MAASPKIGIG…SSDSLRLRVS (67 aa). Positions 54–78 are disordered; sequence TRTRSSDSLRLRVSATANSPSSSSS. The span at 64–78 shows a compositional bias: low complexity; it reads LRVSATANSPSSSSS. FAD-binding positions include 91–94, 113–120, asparagine 133, valine 166, and cysteine 220; these read SGPA and EGYQMGGV. Cysteine 217 and cysteine 220 form a disulfide bridge. The NADP(+) site is built by threonine 240, arginine 265, isoleucine 324, and tyrosine 344. FAD contacts are provided by residues aspartate 364 and 371–374; that span reads RQAV. Residue arginine 371 participates in NADP(+) binding. The Thioredoxin domain occupies 403–529; it reads PQTEEAKKEF…EYREFIEANK (127 aa). Residues cysteine 454 and cysteine 457 each act as nucleophile in the active site. Cysteines 454 and 457 form a disulfide.

Belongs to the class-II pyridine nucleotide-disulfide oxidoreductase family. May homodimerize. Interacts with the 2-Cys peroxiredoxin BAS1. Requires FAD as cofactor.

The protein resides in the plastid. It localises to the chloroplast. The catalysed reaction is [thioredoxin]-dithiol + NADP(+) = [thioredoxin]-disulfide + NADPH + H(+). In terms of biological role, thioredoxin reductase (TR) that exhibits both TR and thioredoxin (Trx) activities. Contains a C-terminal functional Trx domain. Functions as an electron donor for plastidial 2-Cys peroxiredoxins and participates in a NADPH-dependent hydrogen peroxide scavenging system in chloroplasts in the dark. Required for chlorophyll biosynthesis and biogenesis of the photosynthetic apparatus. Activates aerobic cyclase which converts Mg-protoporhyrin monomethyl ester into protochlorophyllide. Involved in a light-dependent regulation of starch biosynthesis by redox activation of the ADP-glucose pyrophosphorylase (AGPase), a central enzyme of starch synthesis. The chain is NADPH-dependent thioredoxin reductase 3 from Arabidopsis thaliana (Mouse-ear cress).